Reading from the N-terminus, the 705-residue chain is Translation factor GUF1 homolog, mitochondrial (705 aa).

The transit peptide at 1–20 (MVCHRYLLGLGASTLCLRRL) directs the protein to the mitochondrion. The disordered stretch occupies residues 72 to 92 (PVEDNGTTNLTGTGEATSETG). The span at 76 to 90 (NGTTNLTGTGEATSE) shows a compositional bias: polar residues. The 184-residue stretch at 105–288 (NRMRNFCIIA…AVVERIPPPK (184 aa)) folds into the tr-type G domain. GTP is bound by residues 114–121 (AHVDHGKS), 181–185 (DTPGH), and 235–238 (NKID).

The protein belongs to the TRAFAC class translation factor GTPase superfamily. Classic translation factor GTPase family. LepA subfamily.

Its subcellular location is the mitochondrion inner membrane. The enzyme catalyses GTP + H2O = GDP + phosphate + H(+). Functionally, promotes mitochondrial protein synthesis. May act as a fidelity factor of the translation reaction, by catalyzing a one-codon backward translocation of tRNAs on improperly translocated ribosomes. Binds to mitochondrial ribosomes in a GTP-dependent manner. The polypeptide is Translation factor GUF1 homolog, mitochondrial (Babesia bovis).